The chain runs to 931 residues: Up-regulator of cell proliferation (931 aa).

Serine 3 is subject to Phosphoserine. The 241-residue stretch at 689–929 (RSRLVVLSTV…NIQQLIELVR (241 aa)) folds into the VLIG-type G domain.

It belongs to the TRAFAC class dynamin-like GTPase superfamily. Very large inducible GTPase (VLIG) family. As to expression, strongly expressed in hepatitis B virus-infected liver and in HCC cells. Also highly expressed in well-differentiated gastric cancer tissues and various gastric cancer cell lines.

It localises to the cytoplasm. The protein resides in the nucleus. Its function is as follows. May be involved in cell cycle progression through the regulation of cyclin D1 expression. May participate in the development of hepatocellular carcinoma (HCC) by promoting hepatocellular growth and survival. May play an important role in development of gastric cancer. The polypeptide is Up-regulator of cell proliferation (URGCP) (Homo sapiens (Human)).